The primary structure comprises 47 residues: Lysis protein for colicins E2 and E3 (47 aa).

The N-terminal stretch at 1 to 19 (MKKITGIILLLLAVIILSA) is a signal peptide. Residue C20 is the site of N-palmitoyl cysteine attachment. Residue C20 is the site of S-diacylglycerol cysteine attachment.

It localises to the cell outer membrane. Functionally, lysis proteins are required for both colicin release and partial cell lysis. This chain is Lysis protein for colicins E2 and E3 (hic), found in Escherichia coli.